We begin with the raw amino-acid sequence, 529 residues long: Keratin, type II cytoskeletal 74 (529 aa).

The head stretch occupies residues 1–139 (MSRQLNIKSS…DPEIQKVRAQ (139 aa)). The coil 1A stretch occupies residues 140–175 (EREQIKVLNDKFASFIDKVRFLEQQNQVLETKWELL). The 314-residue stretch at 140–453 (EREQIKVLND…KLLEGEECRM (314 aa)) folds into the IF rod domain. The interval 176–194 (QQLDLNNCKKNLEPILEGY) is linker 1. The segment at 195–286 (ISNLRKQLET…CLYDAEIAQI (92 aa)) is coil 1B. A linker 12 region spans residues 287–310 (QTHASETSVILSMDNNRDLDLDSI). The segment at 311 to 449 (IAEVRMHYEE…ATYRKLLEGE (139 aa)) is coil 2. The tail stretch occupies residues 450 to 529 (ECRMSGENPS…ASIPARKATR (80 aa)). Over residues 484-500 (GASAVAGSSGSTQSGQT) the composition is skewed to low complexity. The segment at 484 to 529 (GASAVAGSSGSTQSGQTKTTEARGGDLKDTQGKSTPASIPARKATR) is disordered. Residues 503-514 (TEARGGDLKDTQ) are compositionally biased toward basic and acidic residues. Thr-513 carries the post-translational modification Phosphothreonine.

It belongs to the intermediate filament family. Heterotetramer of two type I and two type II keratins. Highly expressed in hair follicles from scalp. In hair, it is specifically present in the inner root sheath (IRS) of the hair follicle. Present in the IRS Huxley layer, but not in Henle layer or cuticle of the IRS. In the IRS Huxley layer, it is expressed in specialized Huxley cells, termed 'Fluegelzellen, along the area of differentiated Henle cells (at protein level).

In terms of biological role, has a role in hair formation. Specific component of keratin intermediate filaments in the inner root sheath (IRS) of the hair follicle. In Homo sapiens (Human), this protein is Keratin, type II cytoskeletal 74 (KRT74).